The chain runs to 413 residues: Phosphopentomutase (413 aa).

Mn(2+) contacts are provided by aspartate 11, aspartate 306, histidine 311, aspartate 347, histidine 348, and histidine 359.

This sequence belongs to the phosphopentomutase family. Mn(2+) is required as a cofactor.

It localises to the cytoplasm. It catalyses the reaction 2-deoxy-alpha-D-ribose 1-phosphate = 2-deoxy-D-ribose 5-phosphate. It carries out the reaction alpha-D-ribose 1-phosphate = D-ribose 5-phosphate. It functions in the pathway carbohydrate degradation; 2-deoxy-D-ribose 1-phosphate degradation; D-glyceraldehyde 3-phosphate and acetaldehyde from 2-deoxy-alpha-D-ribose 1-phosphate: step 1/2. In terms of biological role, isomerase that catalyzes the conversion of deoxy-ribose 1-phosphate (dRib-1-P) and ribose 1-phosphate (Rib-1-P) to deoxy-ribose 5-phosphate (dRib-5-P) and ribose 5-phosphate (Rib-5-P), respectively. This is Phosphopentomutase from Helicobacter pylori (strain ATCC 700392 / 26695) (Campylobacter pylori).